The sequence spans 504 residues: Cytochrome P450 monooxygenase gsfF (504 aa).

A signal peptide spans 1-16; that stretch reads MTVLFILSAGLVAVFG. Asn97 and Asn150 each carry an N-linked (GlcNAc...) asparagine glycan. A heme-binding site is contributed by Cys450.

The protein belongs to the cytochrome P450 family. It depends on heme as a cofactor.

It catalyses the reaction griseophenone B + reduced [NADPH--hemoprotein reductase] + O2 + H(+) = desmethyl-dehydrogriseofulvin + oxidized [NADPH--hemoprotein reductase] + 2 H2O. The protein operates within secondary metabolite biosynthesis; terpenoid biosynthesis. In terms of biological role, cytochrome P450 monooxygenase; part of the gene cluster that mediates the biosynthesis of griseofulvin, an important antifungal drug that has been in use for a long time for treating dermatophyte infections. The first step of the pathway is the formation of the heptaketide backbone by gsfA which is initiated by priming with acetyl-CoA, followed by sequential condensations of 6 malonyl-CoA units. The resulting benzophenone can undergo a spontaneous dehydration to form norlichexanthone. However, the true precursor for the griseofulvin biosynthesis is not norlichexanthone, but the heptaketide benzophenone that is O-methylated at 3-OH by gsfB to produce griseophenone D which is further methylated at 9-OH by gsfC to yield griseophenone C. Griseophenone C is then substrate of halogenase gsfI which is responsible for the regio-specific chlorination at the C13 position to form griseophenone B. The cytochrome P450 gsfF catalyzes the coupling of orcinol and phloroglucinol rings in griseophenone B to form desmethyl-dehydrogriseofulvin A which is further methylated at 5-OH by gsfD to yield dehydrogriseofulvin. Finally, gsfE performs stereospecific reduction of enone 18 of dehydrogriseofulvin to afford the final product griseofulvin. The sequence is that of Cytochrome P450 monooxygenase gsfF from Penicillium aethiopicum.